The following is a 757-amino-acid chain: MATAPLAFHLPFPFPSASRPPPRLLPPSRRPPAARLAATRRFRPPTADDEPPEAAEDSSHGLNRYDQLTRHVERARRRQQAEQPEITPDHPLFSSPPSSGEAGSYDPDDEFFDEIDRAIAEKREEFTRRGLIKPSAPAPSQPEEEDGLADELSPEEVIDLDEIRRLQGLSVVSLADEEDEEANGGGGGVDYGDDGVPLDDDGEVFDVADEVGLEGARVRYPAFRMTLAELLDESKLVPVAVTGDQDVALAGVQRDASLVAAGDLYVCVGEEGLAGLTEADKRGAVAVVADQTVDIEGTLACRALVIVDDITAALRMLPACLYRRPSKDMAVIGVAGTDGVTTTAHLVRAMYEAMGVRTGMVGVLGAYAFGNNKLDAQPDASGDPIAVQRLMATMLYNGAEAALLEATTDGMPSSGVDSEIDYDIAVLTNVRHAGDEAGMTYEEYMNSMASLFSRMVDPERHRKVVNIDDPSAPFFAAQGGQDVPVVTYSFENKKADVHTLKYQLSLFETEVLVQTPHGILEISSGLLGRDNIYNILASVAVGVAVGAPLEDIVKGIEEVDAIPGRCELIDEEQAFGVIVDHARTPESLSRLLDGVKELGPRRIVTVIGCCGERERGKRPVMTKVAAEKSDVVMLTSDNPANEDPLDILDDMLAGVGWTMEEYLKHGTNDYYPPLPNGHRIFLHDIRRVAVRAAVAMGEQGDVVVITGKGNDTYQIEVDKKEFFDDREECREALQYVDQLHRAGIDTSEFPWRLPESH.

The span at 1 to 11 (MATAPLAFHLP) shows a compositional bias: low complexity. A chloroplast-targeting transit peptide spans 1-53 (MATAPLAFHLPFPFPSASRPPPRLLPPSRRPPAARLAATRRFRPPTADDEPPE). Disordered stretches follow at residues 1–112 (MATA…DEFF), 126–152 (FTRR…ADEL), and 172–195 (VSLA…GDDG). The segment covering 12-30 (FPFPSASRPPPRLLPPSRR) has biased composition (pro residues). Acidic residues-rich tracts occupy residues 47–56 (ADDEPPEAAE) and 142–152 (PEEEDGLADEL).

It belongs to the MurCDEF family. MurE subfamily. As to quaternary structure, component of the plastid-encoded plastid RNA polymerase (PEP) complex.

The protein resides in the plastid. It localises to the chloroplast. In terms of biological role, required for the activity of the plastid-encoded RNA polymerase (PEP) and full expression of genes transcribed by PEP. This chain is UDP-N-acetylmuramoyl-L-alanyl-D-glutamate--2,6-diaminopimelate ligase MurE homolog, chloroplastic, found in Oryza sativa subsp. japonica (Rice).